The chain runs to 164 residues: Glutaredoxin-2, mitochondrial (164 aa).

The transit peptide at 1-19 (MIWRRAALAGTRLVWSRSG) directs the protein to the mitochondrion. Phosphoserine is present on Ser-20. Positions 57–157 (VNQIQETISD…PLVHQCYLKK (101 aa)) constitute a Glutaredoxin domain. Cys-68 is a [2Fe-2S] cluster binding site. Lys-74 serves as a coordination point for glutathione. An S-glutathionyl cysteine; alternate modification is found at Cys-77. Cys-77 and Cys-80 are oxidised to a cystine. Glutathione is bound by residues Gln-109 and Val-121. Cys-153 is a binding site for [2Fe-2S] cluster.

The protein belongs to the glutaredoxin family. As to quaternary structure, monomer; active form. Homodimer; inactive form. The homodimer is probably linked by 1 2Fe-2S cluster. As to expression, widely expressed. Expressed in brain, heart, skeletal muscle, colon, thymus, spleen, kidney, liver, small intestine, placenta and lung. Not expressed in peripheral blood leukocytes.

The protein localises to the mitochondrion. It localises to the nucleus. The 2Fe-2S present in the homodimer leads to inactivation of the enzyme. The 2Fe-2S may serve as a redox sensor: the presence of one-electron oxidants or reductants leading to the loss of the 2Fe-2S cluster, subsequent monomerization and activation of the enzyme. Unlike other glutaredoxins, it is not inhibited by oxidation of structural Cys residues. In terms of biological role, glutathione-dependent oxidoreductase that facilitates the maintenance of mitochondrial redox homeostasis upon induction of apoptosis by oxidative stress. Involved in response to hydrogen peroxide and regulation of apoptosis caused by oxidative stress. Acts as a very efficient catalyst of monothiol reactions because of its high affinity for protein glutathione-mixed disulfides. Can receive electrons not only from glutathione (GSH), but also from thioredoxin reductase supporting both monothiol and dithiol reactions. Efficiently catalyzes both glutathionylation and deglutathionylation of mitochondrial complex I, which in turn regulates the superoxide production by the complex. Overexpression decreases the susceptibility to apoptosis and prevents loss of cardiolipin and cytochrome c release. This chain is Glutaredoxin-2, mitochondrial (GLRX2), found in Homo sapiens (Human).